A 133-amino-acid polypeptide reads, in one-letter code: Holo-[acyl-carrier-protein] synthase (133 aa).

Positions 8 and 56 each coordinate Mg(2+).

The protein belongs to the P-Pant transferase superfamily. AcpS family. Mg(2+) serves as cofactor.

The protein localises to the cytoplasm. The catalysed reaction is apo-[ACP] + CoA = holo-[ACP] + adenosine 3',5'-bisphosphate + H(+). Transfers the 4'-phosphopantetheine moiety from coenzyme A to a Ser of acyl-carrier-protein. This Deinococcus radiodurans (strain ATCC 13939 / DSM 20539 / JCM 16871 / CCUG 27074 / LMG 4051 / NBRC 15346 / NCIMB 9279 / VKM B-1422 / R1) protein is Holo-[acyl-carrier-protein] synthase.